The sequence spans 1431 residues: DNA polymerase II large subunit (1431 aa).

The tract at residues 1388–1431 (LLENFANGYNKGKKEEMPKKQRKKEQEKSKKRKVISLDDFFSRK) is disordered. Residues 1399–1415 (GKKEEMPKKQRKKEQEK) show a composition bias toward basic and acidic residues.

Belongs to the archaeal DNA polymerase II family. In terms of assembly, heterodimer of a large subunit and a small subunit. In terms of processing, this protein undergoes a protein self splicing that involves a post-translational excision of the intervening region (intein) followed by peptide ligation.

The enzyme catalyses DNA(n) + a 2'-deoxyribonucleoside 5'-triphosphate = DNA(n+1) + diphosphate. The catalysed reaction is Exonucleolytic cleavage in the 3'- to 5'-direction to yield nucleoside 5'-phosphates.. In terms of biological role, possesses two activities: a DNA synthesis (polymerase) and an exonucleolytic activity that degrades single-stranded DNA in the 3'- to 5'-direction. Has a template-primer preference which is characteristic of a replicative DNA polymerase. This Pyrococcus horikoshii (strain ATCC 700860 / DSM 12428 / JCM 9974 / NBRC 100139 / OT-3) protein is DNA polymerase II large subunit (polC).